A 276-amino-acid polypeptide reads, in one-letter code: Small ribosomal subunit protein uS3 (276 aa).

One can recognise a KH type-2 domain in the interval 39 to 110; the sequence is IRRETMKFFK…KINIKIKEIK (72 aa). The interval 218 to 243 is disordered; sequence DAGQVINRKSSREKSEHFDRSRVDDR. The segment covering 227–243 has biased composition (basic and acidic residues); sequence SSREKSEHFDRSRVDDR.

The protein belongs to the universal ribosomal protein uS3 family. In terms of assembly, part of the 30S ribosomal subunit. Forms a tight complex with proteins S10 and S14.

Functionally, binds the lower part of the 30S subunit head. Binds mRNA in the 70S ribosome, positioning it for translation. This Borrelia hermsii (strain HS1 / DAH) protein is Small ribosomal subunit protein uS3.